Consider the following 227-residue polypeptide: Translation initiation factor 6 (227 aa).

This sequence belongs to the eIF-6 family.

Binds to the 50S ribosomal subunit and prevents its association with the 30S ribosomal subunit to form the 70S initiation complex. The protein is Translation initiation factor 6 of Methanococcus vannielii (strain ATCC 35089 / DSM 1224 / JCM 13029 / OCM 148 / SB).